The following is a 109-amino-acid chain: Nucleoid-associated protein CKO_02678 (109 aa).

A disordered region spans residues Lys-89–Phe-109.

Belongs to the YbaB/EbfC family. In terms of assembly, homodimer.

The protein resides in the cytoplasm. The protein localises to the nucleoid. Functionally, binds to DNA and alters its conformation. May be involved in regulation of gene expression, nucleoid organization and DNA protection. The protein is Nucleoid-associated protein CKO_02678 of Citrobacter koseri (strain ATCC BAA-895 / CDC 4225-83 / SGSC4696).